The chain runs to 197 residues: uncharacterized protein (197 aa).

The next 6 helical transmembrane spans lie at 11-31 (AAMVRTGILGFGGGPSVIPLI), 50-70 (ILAIANALPGPIATKMAAYLG), 79-99 (AIVAILAHILPTCLAMVGLFA), 108-128 (AIVAGMIGAVTPVIAVMLGIM), 136-156 (ALKGFGWVTGILFFIIAFIGL), and 158-178 (TLQINPGLVIIIFLAYGAFHF).

The protein belongs to the chromate ion transporter (CHR) (TC 2.A.51) family.

It is found in the cell membrane. This is an uncharacterized protein from Bacillus subtilis (strain 168).